Here is a 518-residue protein sequence, read N- to C-terminus: Putative BTB/POZ domain and WD-repeat protein R731 (518 aa).

Residues 22 to 92 enclose the BTB domain; it reads TDCQLHLTDS…FYGFPLEEPN (71 aa). The disordered stretch occupies residues 224–246; it reads NHEESSDDEVNDDEDTDNEDTDD. Residues 228 to 246 show a composition bias toward acidic residues; that stretch reads SSDDEVNDDEDTDNEDTDD. 2 WD repeats span residues 391–430 and 437–475; these read NHST…SLIK and FLKF…IIQN.

This sequence belongs to the mimivirus BTB/WD family.

This Acanthamoeba polyphaga (Amoeba) protein is Putative BTB/POZ domain and WD-repeat protein R731.